The sequence spans 438 residues: Putative B3 domain-containing protein Os04g0676650 (438 aa).

Over residues 1 to 11 the composition is skewed to low complexity; that stretch reads MADARGSSSSS. 2 disordered regions span residues 1-30 and 225-285; these read MADA…DFVG and SSSH…MNQN. The span at 12-30 shows a compositional bias: gly residues; sequence GDGGGGEGKGGAGHGDFVG. Residues 258–269 are compositionally biased toward basic and acidic residues; that stretch reads RRSDMESEKNDD. Residues 272–285 show a composition bias toward polar residues; it reads DQTPVSEPPSMNQN. A DNA-binding region (TF-B3) is located at residues 302-404; that stretch reads LRKELTNSDV…KFVVRGEKAI (103 aa).

The protein resides in the nucleus. The protein is Putative B3 domain-containing protein Os04g0676650 of Oryza sativa subsp. japonica (Rice).